Consider the following 496-residue polypeptide: Legumin (496 aa).

An N-terminal signal peptide occupies residues 1–21 (MAKLLALSLSFCFLLFGTCFA). Disulfide bonds link Cys-31/Cys-64 and Cys-107/Cys-318. The 195-residue stretch at 36–230 (LNALKPDNRI…ALNVNRRIVN (195 aa)) folds into the Cupin type-1 1 domain. Residues 240 to 311 (EKGAIVKVKG…RGGSKSQRDN (72 aa)) are disordered. The segment covering 257–269 (PEKEPRQKRGSRQ) has biased composition (basic and acidic residues). One can recognise a Cupin type-1 2 domain in the interval 324-453 (QNIGSSSSPD…INVCQKKLLQ (130 aa)).

This sequence belongs to the 11S seed storage protein (globulins) family. Hexamer; each subunit is composed of an acidic and a basic chain derived from a single precursor and linked by a disulfide bond.

In terms of biological role, seed storage protein. Alpha-amylase inhibitor. The polypeptide is Legumin (Cicer arietinum (Chickpea)).